We begin with the raw amino-acid sequence, 318 residues long: NAD(P)H-dependent D-xylose reductase (318 aa).

Tyr-48 functions as the Proton donor in the catalytic mechanism. His-110 contributes to the substrate binding site. Residues 165–166 (SN), 214–223 (SSFGPQSFVE), and 270–280 (KSNTVPRLLEN) contribute to the NAD(+) site.

Belongs to the aldo/keto reductase family.

The enzyme catalyses xylitol + NAD(+) = D-xylose + NADH + H(+). The catalysed reaction is xylitol + NADP(+) = D-xylose + NADPH + H(+). It functions in the pathway carbohydrate metabolism; D-xylose degradation. With respect to regulation, NADP(+) is a potent inhibitor of both the NADPH- and NADH-linked xylose reduction, whereas NAD(+) showS strong inhibition only with the NADH-linked reaction. Reduces D-xylose into xylitol. Has a preference for NADPH, but can also utilize NADH as cosubstrate. In Scheffersomyces stipitis (strain ATCC 58785 / CBS 6054 / NBRC 10063 / NRRL Y-11545) (Yeast), this protein is NAD(P)H-dependent D-xylose reductase (XYL1).